Reading from the N-terminus, the 253-residue chain is Probable transcriptional regulatory protein Krad_3057 (253 aa).

This sequence belongs to the TACO1 family.

It localises to the cytoplasm. The polypeptide is Probable transcriptional regulatory protein Krad_3057 (Kineococcus radiotolerans (strain ATCC BAA-149 / DSM 14245 / SRS30216)).